A 564-amino-acid polypeptide reads, in one-letter code: Proline--tRNA ligase (564 aa).

This sequence belongs to the class-II aminoacyl-tRNA synthetase family. ProS type 1 subfamily. Homodimer.

The protein localises to the cytoplasm. It catalyses the reaction tRNA(Pro) + L-proline + ATP = L-prolyl-tRNA(Pro) + AMP + diphosphate. In terms of biological role, catalyzes the attachment of proline to tRNA(Pro) in a two-step reaction: proline is first activated by ATP to form Pro-AMP and then transferred to the acceptor end of tRNA(Pro). As ProRS can inadvertently accommodate and process non-cognate amino acids such as alanine and cysteine, to avoid such errors it has two additional distinct editing activities against alanine. One activity is designated as 'pretransfer' editing and involves the tRNA(Pro)-independent hydrolysis of activated Ala-AMP. The other activity is designated 'posttransfer' editing and involves deacylation of mischarged Ala-tRNA(Pro). The misacylated Cys-tRNA(Pro) is not edited by ProRS. In Xanthomonas axonopodis pv. citri (strain 306), this protein is Proline--tRNA ligase.